Here is a 225-residue protein sequence, read N- to C-terminus: Probable molybdenum cofactor guanylyltransferase (225 aa).

GTP is bound by residues 20–22 (LAG), Lys33, Asp88, and Asp117. Asp117 is a binding site for Mg(2+).

This sequence belongs to the MobA family. Mg(2+) is required as a cofactor.

It localises to the cytoplasm. The enzyme catalyses Mo-molybdopterin + GTP + H(+) = Mo-molybdopterin guanine dinucleotide + diphosphate. Its function is as follows. Transfers a GMP moiety from GTP to Mo-molybdopterin (Mo-MPT) cofactor (Moco or molybdenum cofactor) to form Mo-molybdopterin guanine dinucleotide (Mo-MGD) cofactor. The protein is Probable molybdenum cofactor guanylyltransferase of Methanosarcina acetivorans (strain ATCC 35395 / DSM 2834 / JCM 12185 / C2A).